Reading from the N-terminus, the 624-residue chain is Chaperone protein HtpG (624 aa).

The a; substrate-binding stretch occupies residues 1–336 (MKGQETRGFQ…SNDLPLNVSR (336 aa)). A b region spans residues 337-552 (EILQDSTVTR…ADEMSTQMAK (216 aa)). Residues 553–624 (LFAAAGQSVP…IRRMNQLLVS (72 aa)) form a c region.

Belongs to the heat shock protein 90 family. As to quaternary structure, homodimer.

It is found in the cytoplasm. In terms of biological role, molecular chaperone. Has ATPase activity. This chain is Chaperone protein HtpG, found in Salmonella paratyphi A (strain ATCC 9150 / SARB42).